The primary structure comprises 541 residues: Sorting nexin-27 (541 aa).

The segment at 1 to 26 (MADEDGEGIHPAAPHRNGGGGGGGGS) is disordered. A compositionally biased stretch (gly residues) spans 17-26 (NGGGGGGGGS). One can recognise a PDZ domain in the interval 43–136 (VVRIVKSESG…ELILTVLSVP (94 aa)). Residues Ser51 and Ser62 each carry the phosphoserine modification. A PX domain is found at 161-269 (QAVPISVPTY…EFLSESDENY (109 aa)). One can recognise a Ras-associating domain in the interval 273 to 362 (SDVELRVALP…TCLTIRKWLF (90 aa)). Positions 273 to 362 (SDVELRVALP…TCLTIRKWLF (90 aa)) are FERM-like region F1. An FERM-like region F2 region spans residues 373 to 421 (NDLAVTYFFHQAVDDVKKGYIKAEEKSYQLQKLYEQRKMVMYLNMLRTC). The interval 425–525 (NEIIFPHCAC…RVFCELKWRK (101 aa)) is FERM-like region F3.

Core component of the SNX27-retromer, a multiprotein complex composed of SNX27, the WASH complex and the retromer complex. Interacts (via PDZ domain) with a number of target transmembrane proteins (via PDZ-binding motif): ABCC4, ADRB2, ARHGEF7, GRIA1, GRIA2, GRIN1, GRIN2A GRIN2C, KCNJ6, KCNJ9 and SLC2A1/GLUT1. Interacts (via the FERM-like regions) with the WASH complex. Interacts with SNX1. Interacts with CYTIP. Interacts with DGKZ. Interacts with MCC. Interacts (via PDZ domains) with SLC9A3; directs SLC9A3 membrane insertion from early endosomes to the plasma membrane.

The protein resides in the early endosome membrane. Its subcellular location is the cytoplasm. The protein localises to the cytosol. Involved in the retrograde transport from endosome to plasma membrane, a trafficking pathway that promotes the recycling of internalized transmembrane proteins. Following internalization, endocytosed transmembrane proteins are delivered to early endosomes and recycled to the plasma membrane instead of being degraded in lysosomes. SNX27 specifically binds and directs sorting of a subset of transmembrane proteins containing a PDZ-binding motif at the C-terminus: following interaction with target transmembrane proteins, associates with the retromer complex, preventing entry into the lysosomal pathway, and promotes retromer-tubule based plasma membrane recycling. SNX27 also binds with the WASH complex. Interacts with membranes containing phosphatidylinositol-3-phosphate (PtdIns(3P)). May participate in establishment of natural killer cell polarity. Recruits CYTIP to early endosomes. This Bos taurus (Bovine) protein is Sorting nexin-27 (SNX27).